Reading from the N-terminus, the 358-residue chain is MMNEEFKKRFDQYKNGEMSDQEMTAFEEELEKLEVYQELIDSELEDDNDWDLSISPEKQKAILAYGKRKSYLRISVLAVISTLMILPLCTLGSYLYYGMGGKHSTGNEFMETAAVTVALTMPNVLVDTSGLKSQVKLFGMNTEFPLQKQIGTKTAAVGNERVEMFYNKVKAPAVNYYDLEVNKTGHYFTHPSNKSEQTTAKAEKTLSTLPEGTVSEVYLSYDRAYPTKDVYNKFKGYDVSFLWNAIETEKNTNKTASTEPLGYPGKDSKFLAALNTKGKSNGDQFINALKFMSKHEKWAQVISKRKDLNVDNRLDYVEKNGVNVYGSVVTGPTKEIQRMLKNKSVKSANVGEVELWNW.

Residues 74 to 96 (ISVLAVISTLMILPLCTLGSYLY) form a helical membrane-spanning segment.

As to quaternary structure, the N-terminus of YhdL interacts with sigma-M. YhdL interacts specifically with YhdK.

Its subcellular location is the membrane. The protein is Probable anti-sigma-M factor YhdL (yhdL) of Bacillus subtilis (strain 168).